The chain runs to 345 residues: Chorismate synthase (345 aa).

Belongs to the chorismate synthase family. In terms of assembly, homotetramer. FMNH2 is required as a cofactor.

The catalysed reaction is 5-O-(1-carboxyvinyl)-3-phosphoshikimate = chorismate + phosphate. Its pathway is metabolic intermediate biosynthesis; chorismate biosynthesis; chorismate from D-erythrose 4-phosphate and phosphoenolpyruvate: step 7/7. The sequence is that of Chorismate synthase (aroC) from Carsonella ruddii (strain PV).